The following is a 312-amino-acid chain: Ribosomal RNA small subunit methyltransferase H (312 aa).

S-adenosyl-L-methionine is bound by residues 35–37 (GGH), Asp55, Phe79, Asp101, and Gln108.

This sequence belongs to the methyltransferase superfamily. RsmH family.

Its subcellular location is the cytoplasm. The catalysed reaction is cytidine(1402) in 16S rRNA + S-adenosyl-L-methionine = N(4)-methylcytidine(1402) in 16S rRNA + S-adenosyl-L-homocysteine + H(+). Its function is as follows. Specifically methylates the N4 position of cytidine in position 1402 (C1402) of 16S rRNA. This chain is Ribosomal RNA small subunit methyltransferase H, found in Buchnera aphidicola subsp. Schizaphis graminum (strain Sg).